A 318-amino-acid chain; its full sequence is Methionyl-tRNA formyltransferase (318 aa).

115 to 118 (SLLP) serves as a coordination point for (6S)-5,6,7,8-tetrahydrofolate.

Belongs to the Fmt family.

It carries out the reaction L-methionyl-tRNA(fMet) + (6R)-10-formyltetrahydrofolate = N-formyl-L-methionyl-tRNA(fMet) + (6S)-5,6,7,8-tetrahydrofolate + H(+). Attaches a formyl group to the free amino group of methionyl-tRNA(fMet). The formyl group appears to play a dual role in the initiator identity of N-formylmethionyl-tRNA by promoting its recognition by IF2 and preventing the misappropriation of this tRNA by the elongation apparatus. This chain is Methionyl-tRNA formyltransferase, found in Deinococcus radiodurans (strain ATCC 13939 / DSM 20539 / JCM 16871 / CCUG 27074 / LMG 4051 / NBRC 15346 / NCIMB 9279 / VKM B-1422 / R1).